The primary structure comprises 284 residues: F-box protein PP2-B5 (284 aa).

An F-box domain is found at 32–80 (ASFDDLPDDCLAIISSFTSTPRDAFLAALVSKSFGLQFNSDSVWEKFLP).

The polypeptide is F-box protein PP2-B5 (PP2B5) (Arabidopsis thaliana (Mouse-ear cress)).